The primary structure comprises 376 residues: Probable dual-specificity RNA methyltransferase RlmN (376 aa).

Residues 1–25 are disordered; sequence MSDSERTSLPLVFDEPRGRKKPPRH. The Proton acceptor role is filled by E113. A Radical SAM core domain is found at 119-362; the sequence is YPDRATMCVS…PTTVRDTRGR (244 aa). C126 and C368 are oxidised to a cystine. 3 residues coordinate [4Fe-4S] cluster: C133, C137, and C140. S-adenosyl-L-methionine-binding positions include 188–189, S222, 245–247, and N325; these read GE and SLH. C368 functions as the S-methylcysteine intermediate in the catalytic mechanism.

It belongs to the radical SAM superfamily. RlmN family. The cofactor is [4Fe-4S] cluster.

The protein resides in the cytoplasm. The enzyme catalyses adenosine(2503) in 23S rRNA + 2 reduced [2Fe-2S]-[ferredoxin] + 2 S-adenosyl-L-methionine = 2-methyladenosine(2503) in 23S rRNA + 5'-deoxyadenosine + L-methionine + 2 oxidized [2Fe-2S]-[ferredoxin] + S-adenosyl-L-homocysteine. The catalysed reaction is adenosine(37) in tRNA + 2 reduced [2Fe-2S]-[ferredoxin] + 2 S-adenosyl-L-methionine = 2-methyladenosine(37) in tRNA + 5'-deoxyadenosine + L-methionine + 2 oxidized [2Fe-2S]-[ferredoxin] + S-adenosyl-L-homocysteine. Its function is as follows. Specifically methylates position 2 of adenine 2503 in 23S rRNA and position 2 of adenine 37 in tRNAs. This Nocardioides sp. (strain ATCC BAA-499 / JS614) protein is Probable dual-specificity RNA methyltransferase RlmN.